A 35-amino-acid chain; its full sequence is Photosystem II reaction center protein Y (35 aa).

The Lumenal segment spans residues 1-4 (MDTR). The chain crosses the membrane as a helical span at residues 5–23 (LLVVLLPVATAAAWALFNI). Residues 24 to 35 (GRLALQQLKRMS) lie on the Stromal side of the membrane.

This sequence belongs to the PsbY family. As to quaternary structure, PSII is composed of 1 copy each of membrane proteins PsbA, PsbB, PsbC, PsbD, PsbE, PsbF, PsbH, PsbI, PsbJ, PsbK, PsbL, PsbM, PsbT, PsbX, PsbY, PsbZ, Psb30/Ycf12, at least 3 peripheral proteins of the oxygen-evolving complex and a large number of cofactors. It forms dimeric complexes.

The protein resides in the plastid. Its subcellular location is the chloroplast thylakoid membrane. Loosely associated component of the core of photosystem II (PSII), it is not always seen in crystals. PSII is a light-driven water plastoquinone oxidoreductase, using light energy to abstract electrons from H(2)O, generating a proton gradient subsequently used for ATP formation. The sequence is that of Photosystem II reaction center protein Y from Emiliania huxleyi (Coccolithophore).